The sequence spans 289 residues: 4-diphosphocytidyl-2-C-methyl-D-erythritol kinase (289 aa).

Lys-11 is an active-site residue. Residue 95-105 (PMGGGIGGGSS) coordinates ATP. Residue Asp-137 is part of the active site.

Belongs to the GHMP kinase family. IspE subfamily.

It carries out the reaction 4-CDP-2-C-methyl-D-erythritol + ATP = 4-CDP-2-C-methyl-D-erythritol 2-phosphate + ADP + H(+). It participates in isoprenoid biosynthesis; isopentenyl diphosphate biosynthesis via DXP pathway; isopentenyl diphosphate from 1-deoxy-D-xylulose 5-phosphate: step 3/6. Catalyzes the phosphorylation of the position 2 hydroxy group of 4-diphosphocytidyl-2C-methyl-D-erythritol. This chain is 4-diphosphocytidyl-2-C-methyl-D-erythritol kinase, found in Aeromonas hydrophila subsp. hydrophila (strain ATCC 7966 / DSM 30187 / BCRC 13018 / CCUG 14551 / JCM 1027 / KCTC 2358 / NCIMB 9240 / NCTC 8049).